We begin with the raw amino-acid sequence, 282 residues long: Probable transcription factor At1g66420 (282 aa).

The interval 33–73 is disordered; the sequence is SKKNEEFCGGSGKVQPSEMKRRSEGTSTDMTSKRAKKVSAE.

Belongs to the GeBP family.

The sequence is that of Probable transcription factor At1g66420 from Arabidopsis thaliana (Mouse-ear cress).